The following is a 427-amino-acid chain: 3-phosphoshikimate 1-carboxyvinyltransferase (427 aa).

3 residues coordinate 3-phosphoshikimate: Lys22, Ser23, and Arg27. Lys22 serves as a coordination point for phosphoenolpyruvate. Gly96 and Arg124 together coordinate phosphoenolpyruvate. 3-phosphoshikimate-binding residues include Ser169, Ser170, Gln171, Ser197, Asp313, Asn336, and Lys340. Gln171 lines the phosphoenolpyruvate pocket. Asp313 serves as the catalytic Proton acceptor. Arg344, Arg386, and Lys411 together coordinate phosphoenolpyruvate.

It belongs to the EPSP synthase family. As to quaternary structure, monomer.

It is found in the cytoplasm. It catalyses the reaction 3-phosphoshikimate + phosphoenolpyruvate = 5-O-(1-carboxyvinyl)-3-phosphoshikimate + phosphate. The protein operates within metabolic intermediate biosynthesis; chorismate biosynthesis; chorismate from D-erythrose 4-phosphate and phosphoenolpyruvate: step 6/7. Catalyzes the transfer of the enolpyruvyl moiety of phosphoenolpyruvate (PEP) to the 5-hydroxyl of shikimate-3-phosphate (S3P) to produce enolpyruvyl shikimate-3-phosphate and inorganic phosphate. The chain is 3-phosphoshikimate 1-carboxyvinyltransferase from Salmonella newport (strain SL254).